Here is a 199-residue protein sequence, read N- to C-terminus: Interleukin-11 (199 aa).

The N-terminal stretch at 1–21 (MNCVCRLVLVVLSLWPDRVVA) is a signal peptide. Residues 182–190 (HLTLDWAVR) form an important for interaction with IL11RA and for the stimulation of cell proliferation region.

The protein belongs to the IL-6 superfamily. In terms of assembly, interacts with IL11RA to associate with IL6ST, giving rise to a multimeric signaling complex.

The protein localises to the secreted. Cytokine that stimulates the proliferation of hematopoietic stem cells and megakaryocyte progenitor cells and induces megakaryocyte maturation resulting in increased platelet production. Also promotes the proliferation of hepatocytes in response to liver damage. Binding to its receptor formed by IL6ST and IL11RA activates a signaling cascade that promotes cell proliferation. Signaling leads to the activation of intracellular protein kinases and the phosphorylation of STAT3. The interaction with the membrane-bound IL11RA and IL6ST stimulates 'classic signaling', whereas the binding of IL11 and soluble IL11RA to IL6ST stimulates 'trans-signaling'. The polypeptide is Interleukin-11 (Rattus norvegicus (Rat)).